The following is a 462-amino-acid chain: N-myc proto-oncogene protein (462 aa).

An interaction with AURKA region spans residues 19-47 (LEFDSLQPCFYPDEDDFYFGGPDSTPPGE). Residues 61-90 (LSPSRAFPEHSPEPSNWATEMLLPEADLWG) are interaction with AURKA and FBXW7. A 9aaTAD motif is present at residues 76-85 (NWATEMLLPE). Disordered stretches follow at residues 133-177 (EKLQ…ATLP), 232-290 (AAPA…SNNK), and 332-390 (APSP…LERQ). The segment covering 138-174 (GHGPPGASSSCPAPGVGASSSGGRALGGSASAGRTGA) has biased composition (low complexity). The segment covering 257–276 (TLSDSDDEDDEEEDEEEEID) has biased composition (acidic residues). 2 positions are modified to phosphoserine; by CK2: S259 and S261. The bHLH domain maps to 379–431 (ERRRNHNILERQRRNDLRSSFLTLRDHVPELVKNEKAAKVVILKKATEYVHAL). The tract at residues 431-452 (LQANEHQLLLEKEKLQARQQQL) is leucine-zipper.

As to quaternary structure, efficient DNA binding requires dimerization with another bHLH protein. Binds DNA as a heterodimer with MAX. Interacts with KDM5A, KDM5B and HUWE1. Interacts with MYCNOS. Interacts with AURKA; interaction is phospho-independent and triggers AURKA activation; AURKA competes with FBXW7 for binding to unphosphorylated MYCN but not for binding to unphosphorylated MYCN. Interacts with FBXW7; FBXW7 competes with AURKA for binding to unphosphorylated MYCN but not for binding to phosphorylated MYCN. Post-translationally, phosphorylated by GSK3-beta which may promote its degradation. Phosphorylated by AURKA.

Its subcellular location is the nucleus. Its function is as follows. Positively regulates the transcription of MYCNOS in neuroblastoma cells. The protein is N-myc proto-oncogene protein (Mycn) of Rattus norvegicus (Rat).